A 298-amino-acid polypeptide reads, in one-letter code: Acetylglutamate kinase (298 aa).

Residues 69–70 (GG), Arg91, and Asn196 contribute to the substrate site.

The protein belongs to the acetylglutamate kinase family. ArgB subfamily.

Its subcellular location is the cytoplasm. The catalysed reaction is N-acetyl-L-glutamate + ATP = N-acetyl-L-glutamyl 5-phosphate + ADP. Its pathway is amino-acid biosynthesis; L-arginine biosynthesis; N(2)-acetyl-L-ornithine from L-glutamate: step 2/4. In terms of biological role, catalyzes the ATP-dependent phosphorylation of N-acetyl-L-glutamate. The protein is Acetylglutamate kinase of Granulibacter bethesdensis (strain ATCC BAA-1260 / CGDNIH1).